We begin with the raw amino-acid sequence, 500 residues long: NAD(P)H-quinone oxidoreductase chain 4, chloroplastic (500 aa).

14 consecutive transmembrane segments (helical) span residues 4–24 (FPWL…IFFL), 37–57 (ICIC…HFQL), 84–104 (GLSI…TLAA), 111–129 (SRLF…IGSF), 134–154 (LLLF…LLSM), 167–187 (FILY…GMGL), 208–228 (ALEI…SPII), 242–262 (HYST…YGLV), 272–292 (AHSI…IYAA), 305–325 (IAYS…SITD), 330–350 (GAIL…FLAG), 374–396 (IFTM…GFVA), 411–431 (FFMP…LTPI), and 462–482 (LFVS…PDFV).

This sequence belongs to the complex I subunit 4 family.

It localises to the plastid. The protein localises to the chloroplast thylakoid membrane. The enzyme catalyses a plastoquinone + NADH + (n+1) H(+)(in) = a plastoquinol + NAD(+) + n H(+)(out). It catalyses the reaction a plastoquinone + NADPH + (n+1) H(+)(in) = a plastoquinol + NADP(+) + n H(+)(out). The chain is NAD(P)H-quinone oxidoreductase chain 4, chloroplastic from Chloranthus spicatus (Chulantree).